The chain runs to 435 residues: MGKQEVRTRSGERVAIVAGLRTPFARQSTEFGQVPAVDLGKMVVQEMMARTAIDPKLIEQVVFGQVVQMPEAPNIAREIVLGTGMSINTDAYSVTRACATSFQAAVNVAESIMAGSIDIGIAGGADSSSVLPIGVSKKLAASLLALSKTKTVGQKLKLLSNLSFKDLMPVPPAVAEYSTGLSMGQTAEQMAKSYAISRAEQDALAHRSHTLAAQAWAEGKIRDEVMTAFPEPYKKWLDMDNNIRMDSKLESYAKLRPAFDRQYGSVTAANSTPLTDGAAAIMLMREGKAKELGLEIMGYIRSYAFAAIGVEKDMLMGPSYATPIALDRAGITLNDLTLIDMHEAFAAQTLANLKMFASDKFAQEQLGRAQAIGEVDMSKFNVLGGSLAYGHPFAATGARMITQTLRELKRRGGGLALNTACAAGGLGAAMILEVE.

Residue Cys98 is the Acyl-thioester intermediate of the active site. Catalysis depends on proton acceptor residues His391 and Cys421.

This sequence belongs to the thiolase-like superfamily. Thiolase family. In terms of assembly, heterotetramer of two alpha chains (FadJ) and two beta chains (FadI).

Its subcellular location is the cytoplasm. The enzyme catalyses an acyl-CoA + acetyl-CoA = a 3-oxoacyl-CoA + CoA. The protein operates within lipid metabolism; fatty acid beta-oxidation. Functionally, catalyzes the final step of fatty acid oxidation in which acetyl-CoA is released and the CoA ester of a fatty acid two carbons shorter is formed. The polypeptide is 3-ketoacyl-CoA thiolase (Vibrio cholerae serotype O1 (strain ATCC 39315 / El Tor Inaba N16961)).